The following is a 792-amino-acid chain: Phenylalanine--tRNA ligase beta subunit (792 aa).

The region spanning 39–147 (AAAFSGVVVG…DNAPIGQDIR (109 aa)) is the tRNA-binding domain. The B5 domain maps to 400-475 (PERPAVRLRP…RLHGYDAIPA (76 aa)). The Mg(2+) site is built by Asp-453, Asp-459, Glu-462, and Glu-463. Residues 698–791 (SRQPAVTRDV…TETSLGARLR (94 aa)) form the FDX-ACB domain.

Belongs to the phenylalanyl-tRNA synthetase beta subunit family. Type 1 subfamily. As to quaternary structure, tetramer of two alpha and two beta subunits. The cofactor is Mg(2+).

It is found in the cytoplasm. It carries out the reaction tRNA(Phe) + L-phenylalanine + ATP = L-phenylalanyl-tRNA(Phe) + AMP + diphosphate + H(+). The chain is Phenylalanine--tRNA ligase beta subunit from Aromatoleum aromaticum (strain DSM 19018 / LMG 30748 / EbN1) (Azoarcus sp. (strain EbN1)).